The following is a 301-amino-acid chain: tRNA dimethylallyltransferase (301 aa).

An ATP-binding site is contributed by 9 to 16 (GPTASGKS). 11–16 (TASGKS) contributes to the substrate binding site. The interaction with substrate tRNA stretch occupies residues 34–37 (DSMQ).

Belongs to the IPP transferase family. As to quaternary structure, monomer. Mg(2+) is required as a cofactor.

The catalysed reaction is adenosine(37) in tRNA + dimethylallyl diphosphate = N(6)-dimethylallyladenosine(37) in tRNA + diphosphate. In terms of biological role, catalyzes the transfer of a dimethylallyl group onto the adenine at position 37 in tRNAs that read codons beginning with uridine, leading to the formation of N6-(dimethylallyl)adenosine (i(6)A). This is tRNA dimethylallyltransferase from Corynebacterium glutamicum (strain R).